Consider the following 329-residue polypeptide: Diaminopimelate epimerase (329 aa).

Substrate-binding residues include Asn-14 and Asn-73. Cys-82 (proton donor) is an active-site residue. Substrate-binding positions include 83–84, Asn-170, Asn-206, and 224–225; these read GN and ER. Cys-233 (proton acceptor) is an active-site residue. Residue 234-235 coordinates substrate; the sequence is GT.

It belongs to the diaminopimelate epimerase family. In terms of assembly, homodimer.

It localises to the cytoplasm. The catalysed reaction is (2S,6S)-2,6-diaminopimelate = meso-2,6-diaminopimelate. It functions in the pathway amino-acid biosynthesis; L-lysine biosynthesis via DAP pathway; DL-2,6-diaminopimelate from LL-2,6-diaminopimelate: step 1/1. Its function is as follows. Catalyzes the stereoinversion of LL-2,6-diaminopimelate (L,L-DAP) to meso-diaminopimelate (meso-DAP), a precursor of L-lysine and an essential component of the bacterial peptidoglycan. The polypeptide is Diaminopimelate epimerase (Listeria innocua serovar 6a (strain ATCC BAA-680 / CLIP 11262)).